Here is a 145-residue protein sequence, read N- to C-terminus: MDMNFDLYMNGVVEQARNEIESAGYEQLTTAEDVDKVLKQDGTTLVMINSVCGCAGGIARPAASHALHYDVLPDRLVTVFAGQDKEATQRAREYFEGYAPSSPSFALVKDGNITEMIERHQIEGHDVMNVINQLQTLFNKYCEER.

This sequence belongs to the bacilliredoxin family.

This Staphylococcus aureus (strain MRSA252) protein is Bacilliredoxin SAR1592.